Consider the following 469-residue polypeptide: Glutamate--tRNA ligase (469 aa).

Positions Pro9 to Gly19 match the 'HIGH' region motif. Positions Lys236–Arg240 match the 'KMSKS' region motif. Residue Lys239 participates in ATP binding.

The protein belongs to the class-I aminoacyl-tRNA synthetase family. Glutamate--tRNA ligase type 1 subfamily. Monomer.

The protein localises to the cytoplasm. The catalysed reaction is tRNA(Glu) + L-glutamate + ATP = L-glutamyl-tRNA(Glu) + AMP + diphosphate. In terms of biological role, catalyzes the attachment of glutamate to tRNA(Glu) in a two-step reaction: glutamate is first activated by ATP to form Glu-AMP and then transferred to the acceptor end of tRNA(Glu). In Pseudoalteromonas atlantica (strain T6c / ATCC BAA-1087), this protein is Glutamate--tRNA ligase.